Here is a 290-residue protein sequence, read N- to C-terminus: Elongation factor Ts (290 aa).

Positions Thr81–Val84 are involved in Mg(2+) ion dislocation from EF-Tu.

This sequence belongs to the EF-Ts family.

It is found in the cytoplasm. In terms of biological role, associates with the EF-Tu.GDP complex and induces the exchange of GDP to GTP. It remains bound to the aminoacyl-tRNA.EF-Tu.GTP complex up to the GTP hydrolysis stage on the ribosome. In Saccharophagus degradans (strain 2-40 / ATCC 43961 / DSM 17024), this protein is Elongation factor Ts.